We begin with the raw amino-acid sequence, 241 residues long: DNA-binding dual master transcriptional regulator RpaA (241 aa).

In terms of domain architecture, Response regulatory spans arginine 3–leucine 119. Residue aspartate 52 is modified to 4-aspartylphosphate. Residues serine 132–leucine 231 constitute a DNA-binding region (ompR/PhoB-type).

As to quaternary structure, interacts with reduced ferredoxin (petF). Interacts with CikA, RpaB, SasA, Sll0038 (pixG) and a number of other proteins. Phosphorylated by SasA; phosphorylation is maximal when KaiC phosphorylation is active during the circadian cycle. Dephosphorylated by CikA. CikA and SasA cooperation generates RpaA activity oscillation that is distinct from that generated by CikA or SasA alone and offset from the rhythm of KaiC phosphorylation.

The protein resides in the cytoplasm. In terms of biological role, response regulator of 2 two-component regulatory systems SasA/RpaA and CikA/RpaA involved in genome-wide circadian gene expression. The histidine kinases have opposing effects modulated by the clock oscillator proteins; SasA phosphorylates RpaA (stimulated by fully phosphorylated KaiC1) while CikA dephosphorylates phospho-RpaA (stimulated by the phospho-Ser-432-KaiC1-KaiB complex). Its function is as follows. The RpaA regulon is about 300 genes, and includes itself, cikA, sigE, sigG, genes involved in photosynthesis, carbon metabolism in the light and dark, phototaxis, CRISPR arrays 2 and 3 as well as nearly 90 ncRNAs. Genes are up- or down-regulated in its absence. Involved in regulation of primary sugar and amino acid metabolism and in adaptation to light changes. Regulates the accumulation of the monomeric photosystem I and the D1 protein under high light conditions. Overexpression causes cells to grow more slowly, increases levels of transcripts for clock oscillator genes in the light and the dark, increases levels of SigE protein, increases accumulation of sugar catabolic enzymes in the dark with concomitant decreases in most sugar metabolites. Plays a role in cell division; overexpression from the psbAII promoter increases expression of some cell-division-related genes, alters cell volume and changes the outer cell membrane and cell wall appearance. The polypeptide is DNA-binding dual master transcriptional regulator RpaA (Synechocystis sp. (strain ATCC 27184 / PCC 6803 / Kazusa)).